A 435-amino-acid polypeptide reads, in one-letter code: Cysteine--tRNA ligase (435 aa).

A Zn(2+)-binding site is contributed by Cys-24. A 'HIGH' region motif is present at residues 26-36; the sequence is PTVYDHIHIGN. Zn(2+) is bound by residues Cys-202, His-228, and Glu-232. Positions 260 to 264 match the 'KMSKS' region motif; it reads KMSKS. ATP is bound at residue Lys-263.

This sequence belongs to the class-I aminoacyl-tRNA synthetase family. Monomer. The cofactor is Zn(2+).

Its subcellular location is the cytoplasm. The catalysed reaction is tRNA(Cys) + L-cysteine + ATP = L-cysteinyl-tRNA(Cys) + AMP + diphosphate. The chain is Cysteine--tRNA ligase from Mycoplasmoides gallisepticum (strain R(low / passage 15 / clone 2)) (Mycoplasma gallisepticum).